The sequence spans 212 residues: Large ribosomal subunit protein uL3 (212 aa).

At glutamine 152 the chain carries N5-methylglutamine.

The protein belongs to the universal ribosomal protein uL3 family. As to quaternary structure, part of the 50S ribosomal subunit. Forms a cluster with proteins L14 and L19. Post-translationally, methylated by PrmB.

Functionally, one of the primary rRNA binding proteins, it binds directly near the 3'-end of the 23S rRNA, where it nucleates assembly of the 50S subunit. The protein is Large ribosomal subunit protein uL3 of Marinomonas sp. (strain MWYL1).